The chain runs to 359 residues: MKKYLALALIAPLLISCSTTKKGDTYNEAWVKDTNGFDILMGQFAHNIENIWGFKEVVIAGPKDYVKYTDQYQTRSHINFDDGTITIETIAGTEPAAHLRRAIIKTLLMGDDPSSVDLYSDVDDITISKEPFLYGQVVDNTGQPIRWEGRASNFADYLLKNRLQSRNNGLRIIYSVTINMVPNHLDKRAHKYLGMVRQASRKYGVDESLILAIMQTESSFNPYAVSRSDALGLMQVVQHTAGKDVFRSQGKSGTPSRSFLFDPASNIDTGTAYLAMLNNVYLGGIDNPTSRRYAVITAYNGGAGSVLRVFSNDKIQAANIINTMTPGDVYQTLTTRHPSAESRRYLYKVNTAQKSYRRR.

The first 16 residues, Met1 to Ser16, serve as a signal peptide directing secretion. Cys17 carries N-palmitoyl cysteine lipidation. The S-diacylglycerol cysteine moiety is linked to residue Cys17.

The protein belongs to the transglycosylase Slt family.

The protein localises to the cell outer membrane. The enzyme catalyses Exolytic cleavage of the (1-&gt;4)-beta-glycosidic linkage between N-acetylmuramic acid (MurNAc) and N-acetylglucosamine (GlcNAc) residues in peptidoglycan, from either the reducing or the non-reducing ends of the peptidoglycan chains, with concomitant formation of a 1,6-anhydrobond in the MurNAc residue.. In terms of biological role, murein-degrading enzyme. May play a role in recycling of muropeptides during cell elongation and/or cell division. The polypeptide is Membrane-bound lytic murein transglycosylase C (Escherichia coli O8 (strain IAI1)).